Reading from the N-terminus, the 625-residue chain is Alpha-protein kinase vwkA (625 aa).

Over residues 1 to 15 (MESKYVLSTEKESKT) the composition is skewed to basic and acidic residues. The disordered stretch occupies residues 1-64 (MESKYVLSTE…GLSSGGSKTH (64 aa)). Composition is skewed to polar residues over residues 25–39 (DMDSISNSLSKTSLG) and 46–63 (SLKTDASRSGLSSGGSKT). Residues 87 to 114 (TKDSITLAKEKEKKIEKRNEEIKLTFKA) are a coiled coil. The 201-residue stretch at 122–322 (DLLFIVDCTG…KMNERIFISI (201 aa)) folds into the VWFA domain. The 215-residue stretch at 386 to 600 (TCLSSSYEMK…HCKKLGLTIP (215 aa)) folds into the Alpha-type protein kinase domain. 570–576 (GSCNLGK) lines the ATP pocket. Positions 602–625 (FTSSSSTSSSSRSTSSSSSISYSY) are disordered.

Belongs to the protein kinase superfamily. Alpha-type protein kinase family. ALPK subfamily. In terms of assembly, interacts with calmodulin; in the presence of calcium. Post-translationally, autophosphorylated, in vitro.

It localises to the cytoplasm. It is found in the cytosol. Its subcellular location is the perinuclear region. The protein localises to the contractile vacuole membrane. The enzyme catalyses L-seryl-[protein] + ATP = O-phospho-L-seryl-[protein] + ADP + H(+). It carries out the reaction L-threonyl-[protein] + ATP = O-phospho-L-threonyl-[protein] + ADP + H(+). With respect to regulation, autophosphorylation activity enhanced by calcium/calmodulin. Its function is as follows. Displays a modest preference for threonine over serine residues. Does not phosphorylate myosin II, however can phosphorylate MBP, in vitro. May be involved in the regulation of myosin II function during cytokinesis. Overexpression leads to impaired cell proliferation in suspension culture and fails to develop beyond the mound stage. Both overexpression and absence of the gene can result in defects in cytokinesis and alterations in myosin II abundance and assembly. The protein is Alpha-protein kinase vwkA (vwkA) of Dictyostelium discoideum (Social amoeba).